The chain runs to 140 residues: Nucleoside diphosphate kinase (140 aa).

The ATP site is built by Lys-11, Phe-59, Arg-87, Thr-93, Arg-104, and Asn-114. His-117 functions as the Pros-phosphohistidine intermediate in the catalytic mechanism.

It belongs to the NDK family. In terms of assembly, homotetramer. The cofactor is Mg(2+).

It is found in the cytoplasm. The catalysed reaction is a 2'-deoxyribonucleoside 5'-diphosphate + ATP = a 2'-deoxyribonucleoside 5'-triphosphate + ADP. It carries out the reaction a ribonucleoside 5'-diphosphate + ATP = a ribonucleoside 5'-triphosphate + ADP. Major role in the synthesis of nucleoside triphosphates other than ATP. The ATP gamma phosphate is transferred to the NDP beta phosphate via a ping-pong mechanism, using a phosphorylated active-site intermediate. This Rickettsia bellii (strain OSU 85-389) protein is Nucleoside diphosphate kinase.